Reading from the N-terminus, the 330-residue chain is Phosphate acyltransferase (330 aa).

Belongs to the PlsX family. As to quaternary structure, homodimer. Probably interacts with PlsY.

It is found in the cytoplasm. The enzyme catalyses a fatty acyl-[ACP] + phosphate = an acyl phosphate + holo-[ACP]. It functions in the pathway lipid metabolism; phospholipid metabolism. Catalyzes the reversible formation of acyl-phosphate (acyl-PO(4)) from acyl-[acyl-carrier-protein] (acyl-ACP). This enzyme utilizes acyl-ACP as fatty acyl donor, but not acyl-CoA. In Streptococcus pneumoniae (strain ATCC 700669 / Spain 23F-1), this protein is Phosphate acyltransferase.